Reading from the N-terminus, the 96-residue chain is Co-chaperonin GroES (96 aa).

This sequence belongs to the GroES chaperonin family. In terms of assembly, heptamer of 7 subunits arranged in a ring. Interacts with the chaperonin GroEL.

The protein localises to the cytoplasm. Functionally, together with the chaperonin GroEL, plays an essential role in assisting protein folding. The GroEL-GroES system forms a nano-cage that allows encapsulation of the non-native substrate proteins and provides a physical environment optimized to promote and accelerate protein folding. GroES binds to the apical surface of the GroEL ring, thereby capping the opening of the GroEL channel. This Ralstonia nicotianae (strain ATCC BAA-1114 / GMI1000) (Ralstonia solanacearum) protein is Co-chaperonin GroES.